The chain runs to 372 residues: Putative glutamate--cysteine ligase 2 (372 aa).

It belongs to the glutamate--cysteine ligase type 2 family. YbdK subfamily. As to quaternary structure, homodimer.

It catalyses the reaction L-cysteine + L-glutamate + ATP = gamma-L-glutamyl-L-cysteine + ADP + phosphate + H(+). In terms of biological role, ATP-dependent carboxylate-amine ligase which exhibits weak glutamate--cysteine ligase activity. The polypeptide is Putative glutamate--cysteine ligase 2 (ybdK) (Escherichia coli O8 (strain IAI1)).